A 484-amino-acid chain; its full sequence is Aspartyl/glutamyl-tRNA(Asn/Gln) amidotransferase subunit B (484 aa).

This sequence belongs to the GatB/GatE family. GatB subfamily. As to quaternary structure, heterotrimer of A, B and C subunits.

The catalysed reaction is L-glutamyl-tRNA(Gln) + L-glutamine + ATP + H2O = L-glutaminyl-tRNA(Gln) + L-glutamate + ADP + phosphate + H(+). The enzyme catalyses L-aspartyl-tRNA(Asn) + L-glutamine + ATP + H2O = L-asparaginyl-tRNA(Asn) + L-glutamate + ADP + phosphate + 2 H(+). Its function is as follows. Allows the formation of correctly charged Asn-tRNA(Asn) or Gln-tRNA(Gln) through the transamidation of misacylated Asp-tRNA(Asn) or Glu-tRNA(Gln) in organisms which lack either or both of asparaginyl-tRNA or glutaminyl-tRNA synthetases. The reaction takes place in the presence of glutamine and ATP through an activated phospho-Asp-tRNA(Asn) or phospho-Glu-tRNA(Gln). In Cupriavidus metallidurans (strain ATCC 43123 / DSM 2839 / NBRC 102507 / CH34) (Ralstonia metallidurans), this protein is Aspartyl/glutamyl-tRNA(Asn/Gln) amidotransferase subunit B.